We begin with the raw amino-acid sequence, 346 residues long: S-adenosylmethionine:tRNA ribosyltransferase-isomerase (346 aa).

Belongs to the QueA family. In terms of assembly, monomer.

Its subcellular location is the cytoplasm. The catalysed reaction is 7-aminomethyl-7-carbaguanosine(34) in tRNA + S-adenosyl-L-methionine = epoxyqueuosine(34) in tRNA + adenine + L-methionine + 2 H(+). It functions in the pathway tRNA modification; tRNA-queuosine biosynthesis. Its function is as follows. Transfers and isomerizes the ribose moiety from AdoMet to the 7-aminomethyl group of 7-deazaguanine (preQ1-tRNA) to give epoxyqueuosine (oQ-tRNA). This Cereibacter sphaeroides (strain KD131 / KCTC 12085) (Rhodobacter sphaeroides) protein is S-adenosylmethionine:tRNA ribosyltransferase-isomerase.